The primary structure comprises 116 residues: Large ribosomal subunit protein bL17 (116 aa).

This sequence belongs to the bacterial ribosomal protein bL17 family. In terms of assembly, part of the 50S ribosomal subunit. Contacts protein L32.

This Helicobacter pylori (strain P12) protein is Large ribosomal subunit protein bL17.